Here is a 208-residue protein sequence, read N- to C-terminus: Proteasome subunit beta 2 (208 aa).

Positions 1 to 9 (MSGKKIVSK) are cleaved as a propeptide — removed in mature form; by autocatalysis. Threonine 10 functions as the Nucleophile in the catalytic mechanism.

This sequence belongs to the peptidase T1B family. The 20S proteasome core is composed of 14 alpha and 14 beta subunits that assemble into four stacked heptameric rings, resulting in a barrel-shaped structure. The two inner rings, each composed of seven catalytic beta subunits, are sandwiched by two outer rings, each composed of seven alpha subunits. The catalytic chamber with the active sites is on the inside of the barrel. Has a gated structure, the ends of the cylinder being occluded by the N-termini of the alpha-subunits. Is capped at one or both ends by the proteasome regulatory ATPase, PAN.

The protein resides in the cytoplasm. The catalysed reaction is Cleavage of peptide bonds with very broad specificity.. The formation of the proteasomal ATPase PAN-20S proteasome complex, via the docking of the C-termini of PAN into the intersubunit pockets in the alpha-rings, triggers opening of the gate for substrate entry. Interconversion between the open-gate and close-gate conformations leads to a dynamic regulation of the 20S proteasome proteolysis activity. Component of the proteasome core, a large protease complex with broad specificity involved in protein degradation. This chain is Proteasome subunit beta 2, found in Staphylothermus marinus (strain ATCC 43588 / DSM 3639 / JCM 9404 / F1).